We begin with the raw amino-acid sequence, 315 residues long: Methionyl-tRNA formyltransferase (315 aa).

Residue 113-116 participates in (6S)-5,6,7,8-tetrahydrofolate binding; the sequence is SLLP.

This sequence belongs to the Fmt family.

The enzyme catalyses L-methionyl-tRNA(fMet) + (6R)-10-formyltetrahydrofolate = N-formyl-L-methionyl-tRNA(fMet) + (6S)-5,6,7,8-tetrahydrofolate + H(+). Attaches a formyl group to the free amino group of methionyl-tRNA(fMet). The formyl group appears to play a dual role in the initiator identity of N-formylmethionyl-tRNA by promoting its recognition by IF2 and preventing the misappropriation of this tRNA by the elongation apparatus. The chain is Methionyl-tRNA formyltransferase from Enterobacter sp. (strain 638).